Consider the following 388-residue polypeptide: Chorismate synthase (388 aa).

Positions 39 and 45 each coordinate NADP(+). Residues 130–132, 251–252, Gly296, 311–315, and Arg337 each bind FMN; these read RSS, NA, and KPIPT.

This sequence belongs to the chorismate synthase family. As to quaternary structure, homotetramer. It depends on FMNH2 as a cofactor.

It carries out the reaction 5-O-(1-carboxyvinyl)-3-phosphoshikimate = chorismate + phosphate. It functions in the pathway metabolic intermediate biosynthesis; chorismate biosynthesis; chorismate from D-erythrose 4-phosphate and phosphoenolpyruvate: step 7/7. Its function is as follows. Catalyzes the anti-1,4-elimination of the C-3 phosphate and the C-6 proR hydrogen from 5-enolpyruvylshikimate-3-phosphate (EPSP) to yield chorismate, which is the branch point compound that serves as the starting substrate for the three terminal pathways of aromatic amino acid biosynthesis. This reaction introduces a second double bond into the aromatic ring system. In Streptococcus pyogenes serotype M12 (strain MGAS2096), this protein is Chorismate synthase.